The following is an 838-amino-acid chain: MTSTANYNNSGKDSYFSEIKKSELGLIKNNLSTAINERNADKIKDILQRIIYYMTIGMDVSVLFPDVIMVASSNDIIIKKLVYLYIVHYSKSNPDLLLLVVNTLRRDCIDRNPIIRGLALRSLCSLDSKNTLEYATIEINRSLTDFSGYVRKTALLGLAKLYHLSKEAFDLDIIIPKIFDMIMDQDPQVIVNAVSTLNEIKPGWSFTFDLVQHLMIKFKEFNEWSQCIILECLSRYTPSSEDESLDILNLLDDRLSHSNSALTLSTIKIFLKYTDEFEEIQEQVYERIKEPLITLMESSESNETSFTILHHIHLLMSRSPRLFNRYYKHFYCKFDDPLYIKTLKVQVLKEIASNQTFIESIDEILQELSEYVYEGDHSLCKQSINAITVIAQKHKNTQEKYPIDESVLEKIFLPYLSVSSNLGGAGDDNISINEGILSFILISLKDFLRVFPKHLKTVLPYINENLIGIGSVSNYTLPPSANESVLWMLGESPNSQVNSPYIIEEFFNEKFDQQPTFVKTQLLTTSLKVFFDRPGEMLPILKRILKKCCSDLSQDPGLHEISLFYSRIILLLDIDKAASIINSSKQTTSINTFLEDEINEYRDKIFDEFNTLSVLFGKHSTKFIKNKKQIENEKLQFLENQKNYLLSITDGNQNNNQNNNQNNNQNNNQNNNQNNQNNNNQNNNSKQLLKEIESSPNNLIDTFILDQQPELSPELFQSLWLSLEDGHKIDIQLDSPIDNSEIESVMSKQGIICLAFGSVDQQTKLYYYARQNLSFDIDFNSEQNQQQPQPIFIIEILIDENTLLMSILFKSPILKTLHNKFIPKFLSILSIPIPKIFN.

Residues 582–673 form a hinge region; that stretch reads NSSKQTTSIN…NQNNNQNNNQ (92 aa). A disordered region spans residues 648 to 683; it reads ITDGNQNNNQNNNQNNNQNNNQNNNQNNQNNNNQNN. The span at 652-683 shows a compositional bias: low complexity; sequence NQNNNQNNNQNNNQNNNQNNNQNNQNNNNQNN. Positions 674–838 are ear; the sequence is NNQNNNNQNN…LSIPIPKIFN (165 aa).

It belongs to the adaptor complexes large subunit family. As to quaternary structure, may be part of the adaptor protein complex 4 (AP-4), a heterotetramer composed of two large adaptins (epsilon-type subunitand beta-type subunit), a medium adaptin (mu-type subunit) and a small adaptin (sigma-type).

The protein localises to the golgi apparatus. Its subcellular location is the trans-Golgi network membrane. Functionally, probable component of an adaptor protein complex. Adaptor protein complexes are vesicle coat components involved both in vesicle formation and cargo selection. They control the vesicular transport of proteins in different trafficking pathways. This is AP-4 complex subunit beta (ap4b1) from Dictyostelium discoideum (Social amoeba).